Consider the following 185-residue polypeptide: Disulfide bond formation protein B (185 aa).

Over 1-25 (MLLFFVILGIFVLTILKAISKQRWS) the chain is Cytoplasmic. A helical membrane pass occupies residues 26–42 (WLLLAASALSLELSALY). At 43-60 (FQHVMQLEPCVMCVYERL) the chain is on the periplasmic side. Residues C52 and C55 are joined by a disulfide bond. The helical transmembrane segment at 61-76 (AMLGILLAGLIGASSP) threads the bilayer. Over 77–83 (NNVFIRL) the chain is Cytoplasmic. A helical transmembrane segment spans residues 84–101 (SAFLLWGISAVWGILLAI). Over 102-156 (KHTDYQLHPSPFFTCDFFPNFPAWAPLHEWLPWLFNPTGDCSDIVWQFLGYSMPQ) the chain is Periplasmic. The cysteines at positions 116 and 142 are disulfide-linked. A helical membrane pass occupies residues 157–175 (WLIVSFSLYTLLFIIFAIS). Over 176–185 (AVLKTKKQLF) the chain is Cytoplasmic.

Belongs to the DsbB family.

The protein resides in the cell inner membrane. In terms of biological role, required for disulfide bond formation in some periplasmic proteins. Acts by oxidizing the DsbA protein. The protein is Disulfide bond formation protein B of Psychromonas ingrahamii (strain DSM 17664 / CCUG 51855 / 37).